A 1051-amino-acid polypeptide reads, in one-letter code: Protein transport protein Sec16B (1051 aa).

Residues 1–23 are compositionally biased toward polar residues; the sequence is MEPWVPQTQGRTTGPSRDTNRGL. Positions 1–109 are disordered; sequence MEPWVPQTQG…PYQRYHTPTP (109 aa). Residues 39 to 63 show a composition bias toward basic and acidic residues; the sequence is DKYHQWQDAHKNSKSQQDLRDDHQQ. Residues 64-77 show a composition bias toward polar residues; it reads SHSVSRSGEWSQPV. Phosphoserine occurs at positions 70 and 137. A disordered region spans residues 157 to 203; the sequence is EKHNGTFGANSDTQFQFTSKNPYRDSPASVSGQEQPGEFFPESEAQK. Residues 163–177 are compositionally biased toward polar residues; it reads FGANSDTQFQFTSKN. Phosphoserine is present on residues S182, S185, and S245. The tract at residues 263-708 is central conserved domain (CCD); required for localization to endoplasmic reticulum exit sites; that stretch reads APMRFYVPHV…KHKDLEQNRT (446 aa). Basic and acidic residues predominate over residues 703 to 715; the sequence is LEQNRTGAPRDPD. 3 disordered regions span residues 703–754, 798–820, and 850–1051; these read LEQN…LWST, SGAS…EDML, and TPAA…TQPC. The segment covering 737–754 has biased composition (polar residues); sequence GHQNYSEDSEYSSTLWST. Low complexity predominate over residues 798 to 809; the sequence is SGASGSSVAVTG. T850 is modified (phosphothreonine). S860, S863, S866, S874, and S875 each carry phosphoserine. Positions 877 to 897 are enriched in basic and acidic residues; that stretch reads GADKPSHPDASQKGKLGDGKN. The span at 900–920 shows a compositional bias: low complexity; sequence SSGFGWFSWFRSKPASSVSTS. Residues 921 to 932 show a composition bias toward acidic residues; the sequence is GDEDSSDSSDSE. A compositionally biased stretch (low complexity) spans 936 to 947; sequence RASSPHHASPGL. Residues 984-993 are compositionally biased toward gly residues; that stretch reads EGMGIGGFSG. Polar residues predominate over residues 1022–1037; sequence NPSQVPQLPTASSLNR.

It belongs to the SEC16 family. SEC16A and SEC16B are each present in multiple copies in a heteromeric complex. Interacts with TFG. Interacts with SEC13. As to expression, liver.

The protein resides in the endoplasmic reticulum membrane. Its subcellular location is the golgi apparatus membrane. Its function is as follows. Plays a role in the organization of the endoplasmic reticulum exit sites (ERES), also known as transitional endoplasmic reticulum (tER). Required for secretory cargo traffic from the endoplasmic reticulum to the Golgi apparatus. Involved in peroxisome biogenesis. Regulates the transport of peroxisomal biogenesis factors PEX3 and PEX16 from the ER to peroxisomes. The sequence is that of Protein transport protein Sec16B (Sec16b) from Mus musculus (Mouse).